The chain runs to 236 residues: Orotidine 5'-phosphate decarboxylase (236 aa).

Residues Asp-13, Lys-35, 62–71 (DLKFYDIPQT), Thr-123, Arg-184, Gln-193, Gly-213, and Arg-214 contribute to the substrate site. The active-site Proton donor is Lys-64.

It belongs to the OMP decarboxylase family. Type 1 subfamily. In terms of assembly, homodimer.

The enzyme catalyses orotidine 5'-phosphate + H(+) = UMP + CO2. Its pathway is pyrimidine metabolism; UMP biosynthesis via de novo pathway; UMP from orotate: step 2/2. In terms of biological role, catalyzes the decarboxylation of orotidine 5'-monophosphate (OMP) to uridine 5'-monophosphate (UMP). The polypeptide is Orotidine 5'-phosphate decarboxylase (Coxiella burnetii (strain CbuK_Q154) (Coxiella burnetii (strain Q154))).